An 87-amino-acid polypeptide reads, in one-letter code: Sec-independent protein translocase protein TatA (87 aa).

A helical transmembrane segment spans residues Gly-3–Ala-23. Residues Met-47–Ala-87 form a disordered region. Residues Pro-52–Ala-87 are compositionally biased toward low complexity.

It belongs to the TatA/E family. As to quaternary structure, the Tat system comprises two distinct complexes: a TatABC complex, containing multiple copies of TatA, TatB and TatC subunits, and a separate TatA complex, containing only TatA subunits. Substrates initially bind to the TatABC complex, which probably triggers association of the separate TatA complex to form the active translocon.

Its subcellular location is the cell membrane. In terms of biological role, part of the twin-arginine translocation (Tat) system that transports large folded proteins containing a characteristic twin-arginine motif in their signal peptide across membranes. TatA could form the protein-conducting channel of the Tat system. The chain is Sec-independent protein translocase protein TatA from Nocardia farcinica (strain IFM 10152).